We begin with the raw amino-acid sequence, 101 residues long: Urease subunit beta (101 aa).

It belongs to the urease beta subunit family. As to quaternary structure, heterotrimer of UreA (gamma), UreB (beta) and UreC (alpha) subunits. Three heterotrimers associate to form the active enzyme.

It localises to the cytoplasm. The enzyme catalyses urea + 2 H2O + H(+) = hydrogencarbonate + 2 NH4(+). Its pathway is nitrogen metabolism; urea degradation; CO(2) and NH(3) from urea (urease route): step 1/1. The protein is Urease subunit beta of Rhizobium etli (strain CIAT 652).